Here is a 108-residue protein sequence, read N- to C-terminus: Pyrimidine/purine nucleoside phosphorylase (108 aa).

The protein belongs to the nucleoside phosphorylase PpnP family.

The enzyme catalyses a purine D-ribonucleoside + phosphate = a purine nucleobase + alpha-D-ribose 1-phosphate. It catalyses the reaction adenosine + phosphate = alpha-D-ribose 1-phosphate + adenine. It carries out the reaction cytidine + phosphate = cytosine + alpha-D-ribose 1-phosphate. The catalysed reaction is guanosine + phosphate = alpha-D-ribose 1-phosphate + guanine. The enzyme catalyses inosine + phosphate = alpha-D-ribose 1-phosphate + hypoxanthine. It catalyses the reaction thymidine + phosphate = 2-deoxy-alpha-D-ribose 1-phosphate + thymine. It carries out the reaction uridine + phosphate = alpha-D-ribose 1-phosphate + uracil. The catalysed reaction is xanthosine + phosphate = alpha-D-ribose 1-phosphate + xanthine. Its function is as follows. Catalyzes the phosphorolysis of diverse nucleosides, yielding D-ribose 1-phosphate and the respective free bases. Can use uridine, adenosine, guanosine, cytidine, thymidine, inosine and xanthosine as substrates. Also catalyzes the reverse reactions. This chain is Pyrimidine/purine nucleoside phosphorylase, found in Acinetobacter baumannii (strain AB307-0294).